Consider the following 341-residue polypeptide: Tubulin-specific chaperone C (341 aa).

Met-1 bears the N-acetylmethionine mark. A compositionally biased stretch (basic and acidic residues) spans 34–49 (ERQIEVERRKQKRQDQ). The interval 34-55 (ERQIEVERRKQKRQDQEVEEEK) is disordered. A Phosphoserine modification is found at Ser-79. Residues 148–173 (TAQVDAAPVTSAAPSPPVTKEEEGAP) form a disordered region. In terms of domain architecture, C-CAP/cofactor C-like spans 163–318 (PPVTKEEEGA…NWDQVDDFNW (156 aa)).

This sequence belongs to the TBCC family. Supercomplex made of cofactors A to E. Cofactors A and D function by capturing and stabilizing tubulin in a quasi-native conformation. Cofactor E binds to the cofactor D-tubulin complex; interaction with cofactor C then causes the release of tubulin polypeptides that are committed to the native state.

The protein resides in the cytoplasm. In terms of biological role, tubulin-folding protein; involved in the final step of the tubulin folding pathway. The protein is Tubulin-specific chaperone C (Tbcc) of Mus musculus (Mouse).